Consider the following 43-residue polypeptide: Protein PsbN (43 aa).

The chain crosses the membrane as a helical span at residues 5–27 (TLVAIFISCLLVSFTGYAPYTAS).

The protein belongs to the PsbN family.

The protein resides in the plastid. Its subcellular location is the chloroplast thylakoid membrane. Functionally, may play a role in photosystem I and II biogenesis. In Anthoceros angustus (Hornwort), this protein is Protein PsbN.